The following is a 125-amino-acid chain: Small ribosomal subunit protein eS25 (125 aa).

Positions Met-1 to Val-23 are enriched in basic and acidic residues. Residues Met-1–Gly-38 form a disordered region. Residues Gly-28 to Gly-38 are compositionally biased toward basic residues. Lys-43 bears the N6-acetyllysine mark. At Lys-52 the chain carries N6-acetyllysine; alternate. Lys-52 carries the post-translational modification N6-succinyllysine; alternate. Lys-60 and Lys-66 each carry N6-acetyllysine. Lys-94 bears the N6-acetyllysine; alternate mark. Lys-94 carries the N6-succinyllysine; alternate modification.

The protein belongs to the eukaryotic ribosomal protein eS25 family. In terms of assembly, component of the small ribosomal subunit.

Its subcellular location is the cytoplasm. Functionally, component of the small ribosomal subunit. The ribosome is a large ribonucleoprotein complex responsible for the synthesis of proteins in the cell. The sequence is that of Small ribosomal subunit protein eS25 (RPS25) from Homo sapiens (Human).